The following is a 454-amino-acid chain: Chromosomal replication initiator protein DnaA (454 aa).

Residues 1-77 (MASLNENQKF…GFEVFGRMID (77 aa)) form a domain I, interacts with DnaA modulators region. The interval 77–115 (DYELYANDELTDIELRRLNNQSPVDEPLSVAKPTSPLVS) is domain II. The tract at residues 116–332 (GLNEKYNFEN…GALNRVEFVA (217 aa)) is domain III, AAA+ region. ATP contacts are provided by Gly-160, Gly-162, Lys-163, and Thr-164. The tract at residues 333-454 (RANGISIVDI…KDIDSIKRKF (122 aa)) is domain IV, binds dsDNA.

The protein belongs to the DnaA family. In terms of assembly, oligomerizes as a right-handed, spiral filament on DNA at oriC.

It is found in the cytoplasm. In terms of biological role, plays an essential role in the initiation and regulation of chromosomal replication. ATP-DnaA binds to the origin of replication (oriC) to initiate formation of the DNA replication initiation complex once per cell cycle. Binds the DnaA box (a 9 base pair repeat at the origin) and separates the double-stranded (ds)DNA. Forms a right-handed helical filament on oriC DNA; dsDNA binds to the exterior of the filament while single-stranded (ss)DNA is stabiized in the filament's interior. The ATP-DnaA-oriC complex binds and stabilizes one strand of the AT-rich DNA unwinding element (DUE), permitting loading of DNA polymerase. After initiation quickly degrades to an ADP-DnaA complex that is not apt for DNA replication. Binds acidic phospholipids. In Lactococcus lactis subsp. cremoris (strain MG1363), this protein is Chromosomal replication initiator protein DnaA.